The primary structure comprises 215 residues: Ribosomal RNA small subunit methyltransferase G (215 aa).

Residues Gly-73, Leu-78, 125–126, and Arg-140 each bind S-adenosyl-L-methionine; that span reads AE.

The protein belongs to the methyltransferase superfamily. RNA methyltransferase RsmG family.

The protein localises to the cytoplasm. Its function is as follows. Specifically methylates the N7 position of guanine in position 518 of 16S rRNA. The chain is Ribosomal RNA small subunit methyltransferase G from Renibacterium salmoninarum (strain ATCC 33209 / DSM 20767 / JCM 11484 / NBRC 15589 / NCIMB 2235).